Here is a 583-residue protein sequence, read N- to C-terminus: J protein JJJ2 (583 aa).

The J domain occupies 11–79 (RTTYYSILGL…KLRYDRDLKI (69 aa)). Residues 215-224 (SYSEDPNSCL) show a composition bias toward polar residues. The disordered stretch occupies residues 215–313 (SYSEDPNSCL…SGSHDSNLQS (99 aa)). Position 229 is a phosphoserine (Ser-229). The segment covering 240–252 (QQQQQQQQQQQQQ) has biased composition (low complexity). The span at 262–281 (SPDEEKKNNKEPKRESRVSP) shows a compositional bias: basic and acidic residues. Residues 298-313 (KTSTFSSGSHDSNLQS) are compositionally biased toward polar residues.

Its subcellular location is the cytoplasm. It localises to the nucleus. This Saccharomyces cerevisiae (strain ATCC 204508 / S288c) (Baker's yeast) protein is J protein JJJ2 (JJJ2).